Reading from the N-terminus, the 291-residue chain is Bis(5'-nucleosyl)-tetraphosphatase, symmetrical (291 aa).

It belongs to the Ap4A hydrolase family.

It carries out the reaction P(1),P(4)-bis(5'-adenosyl) tetraphosphate + H2O = 2 ADP + 2 H(+). Functionally, hydrolyzes diadenosine 5',5'''-P1,P4-tetraphosphate to yield ADP. This chain is Bis(5'-nucleosyl)-tetraphosphatase, symmetrical, found in Coxiella burnetii (strain CbuK_Q154) (Coxiella burnetii (strain Q154)).